The primary structure comprises 294 residues: Nucleotide-binding protein Tfu_2020 (294 aa).

An ATP-binding site is contributed by 18–25; the sequence is GMSGAGRS. 69–72 serves as a coordination point for GTP; that stretch reads DVRS.

It belongs to the RapZ-like family.

Its function is as follows. Displays ATPase and GTPase activities. In Thermobifida fusca (strain YX), this protein is Nucleotide-binding protein Tfu_2020.